Consider the following 88-residue polypeptide: UPF0473 protein CLL_A1177 (88 aa).

This sequence belongs to the UPF0473 family.

This is UPF0473 protein CLL_A1177 from Clostridium botulinum (strain Eklund 17B / Type B).